Consider the following 60-residue polypeptide: Large ribosomal subunit protein uL30 (60 aa).

Belongs to the universal ribosomal protein uL30 family. Part of the 50S ribosomal subunit.

The chain is Large ribosomal subunit protein uL30 from Leuconostoc mesenteroides subsp. mesenteroides (strain ATCC 8293 / DSM 20343 / BCRC 11652 / CCM 1803 / JCM 6124 / NCDO 523 / NBRC 100496 / NCIMB 8023 / NCTC 12954 / NRRL B-1118 / 37Y).